The primary structure comprises 54 residues: Secreted virulence factor MC69 (54 aa).

The first 16 residues, 1-16 (MKAAFVLALCASLASA), serve as a signal peptide directing secretion. Cysteine 36 and cysteine 46 are oxidised to a cystine.

It belongs to the MC69 virulence factor family.

The protein resides in the secreted. Functionally, secreted protein required for appressorial penetration of intact host epidermal cells and for pathogenicity. This Pyricularia oryzae (strain 70-15 / ATCC MYA-4617 / FGSC 8958) (Rice blast fungus) protein is Secreted virulence factor MC69.